The chain runs to 368 residues: Peptide chain release factor 2 (368 aa).

Q250 carries the N5-methylglutamine modification.

This sequence belongs to the prokaryotic/mitochondrial release factor family. In terms of processing, methylated by PrmC. Methylation increases the termination efficiency of RF2.

It localises to the cytoplasm. Peptide chain release factor 2 directs the termination of translation in response to the peptide chain termination codons UGA and UAA. The sequence is that of Peptide chain release factor 2 from Mycolicibacterium smegmatis (strain ATCC 700084 / mc(2)155) (Mycobacterium smegmatis).